Reading from the N-terminus, the 318-residue chain is tRNA uridine(34) hydroxylase (318 aa).

The Rhodanese domain maps to 123 to 217 (EDDDTVIIDA…YGKDPETKGQ (95 aa)). C177 (cysteine persulfide intermediate) is an active-site residue.

It belongs to the TrhO family.

It carries out the reaction uridine(34) in tRNA + AH2 + O2 = 5-hydroxyuridine(34) in tRNA + A + H2O. Catalyzes oxygen-dependent 5-hydroxyuridine (ho5U) modification at position 34 in tRNAs. In Staphylococcus aureus (strain MRSA252), this protein is tRNA uridine(34) hydroxylase.